Here is a 677-residue protein sequence, read N- to C-terminus: Methionine--tRNA ligase (677 aa).

The 'HIGH' region signature appears at 15-25 (PYANGSIHLGH). Zn(2+)-binding residues include cysteine 146, cysteine 149, cysteine 159, and cysteine 162. The short motif at 333–337 (KMSKS) is the 'KMSKS' region element. ATP is bound at residue lysine 336. The tRNA-binding domain occupies 575 to 677 (DFAKVDLRVA…AGAKPGHQVK (103 aa)).

This sequence belongs to the class-I aminoacyl-tRNA synthetase family. MetG type 1 subfamily. Homodimer. It depends on Zn(2+) as a cofactor.

It localises to the cytoplasm. It catalyses the reaction tRNA(Met) + L-methionine + ATP = L-methionyl-tRNA(Met) + AMP + diphosphate. Its function is as follows. Is required not only for elongation of protein synthesis but also for the initiation of all mRNA translation through initiator tRNA(fMet) aminoacylation. This Escherichia coli O17:K52:H18 (strain UMN026 / ExPEC) protein is Methionine--tRNA ligase.